Consider the following 997-residue polypeptide: Kinesin-like protein KIF19 (997 aa).

In terms of domain architecture, Kinesin motor spans glutamine 11–isoleucine 346. Glycine 104 to threonine 111 lines the ATP pocket. Residues histidine 360–leucine 437 are a coiled coil. Over residues arginine 468–aspartate 491 the composition is skewed to basic and acidic residues. A disordered region spans residues arginine 468–proline 503. The stretch at alanine 508–glutamine 577 forms a coiled coil. Disordered stretches follow at residues asparagine 662–isoleucine 690, glycine 792–glutamate 811, and glycine 848–phenylalanine 890. 2 stretches are compositionally biased toward basic and acidic residues: residues glycine 792–serine 802 and glutamine 869–valine 880. The stretch at histidine 861–serine 889 forms a coiled coil.

Belongs to the TRAFAC class myosin-kinesin ATPase superfamily. Kinesin family.

Its subcellular location is the cytoplasm. It is found in the cytoskeleton. The protein resides in the cell projection. It localises to the cilium. In terms of biological role, plus end-directed microtubule-dependent motor protein that regulates the length of motile cilia by mediating depolymerization of microtubules at ciliary tips. In Xenopus laevis (African clawed frog), this protein is Kinesin-like protein KIF19 (kif19).